The primary structure comprises 245 residues: Probable phosphatase YE2421 (245 aa).

Zn(2+) contacts are provided by His-7, His-9, His-15, His-40, Glu-73, His-101, His-131, Asp-192, and His-194.

It belongs to the PHP family. In terms of assembly, homotrimer. Requires Zn(2+) as cofactor.

The protein is Probable phosphatase YE2421 of Yersinia enterocolitica serotype O:8 / biotype 1B (strain NCTC 13174 / 8081).